Here is a 110-residue protein sequence, read N- to C-terminus: Small ribosomal subunit protein bS16 (110 aa).

The span at valine 82–glutamine 103 shows a compositional bias: basic and acidic residues. Positions valine 82–glycine 110 are disordered.

The protein belongs to the bacterial ribosomal protein bS16 family.

The polypeptide is Small ribosomal subunit protein bS16 (Bradyrhizobium sp. (strain ORS 278)).